A 463-amino-acid chain; its full sequence is Probable Xaa-Pro aminopeptidase pepP (463 aa).

Residues aspartate 259, aspartate 270, glutamate 393, and glutamate 433 each coordinate Mn(2+).

It belongs to the peptidase M24B family. The cofactor is Mn(2+).

The enzyme catalyses Release of any N-terminal amino acid, including proline, that is linked to proline, even from a dipeptide or tripeptide.. Catalyzes the removal of a penultimate prolyl residue from the N-termini of peptides. This Pyrenophora teres f. teres (strain 0-1) (Barley net blotch fungus) protein is Probable Xaa-Pro aminopeptidase pepP (pepP).